Here is a 447-residue protein sequence, read N- to C-terminus: Retinoic acid receptor alpha (447 aa).

Residues 1 to 79 (MAGKGNPVPG…PPPPPRVYKP (79 aa)) form a modulating region. Positions 47–61 (TPSPATIETQSTSSE) are enriched in polar residues. The segment at 47 to 72 (TPSPATIETQSTSSEEIVPSPPSPPP) is disordered. NR C4-type zinc fingers lie at residues 80–100 (CFVCQDKSSGYHYGVSACEGC) and 116–140 (CHREKNCIINKVTRNRCQYCRLQKC). A DNA-binding region (nuclear receptor) is located at residues 80-145 (CFVCQDKSSG…RLQKCLEVGM (66 aa)). The segment at 146–174 (SKESVRNDRNKKKKDEKKPECIENYVLSP) is hinge. Residues 175–409 (DTEQMINRVR…PLIQEMLENS (235 aa)) form the NR LBD domain. The 9aaTAD motif lies at 400 to 408 (PLIQEMLEN). The disordered stretch occupies residues 407–447 (ENSEGLESGATGSRPSGAPPGSCSPSLSPSSAQSSPPTQSP). Positions 414 to 447 (SGATGSRPSGAPPGSCSPSLSPSSAQSSPPTQSP) are enriched in low complexity.

It belongs to the nuclear hormone receptor family. NR1 subfamily. Heterodimer; with an rxr molecule. Binds DNA preferentially as a rar/rxr heterodimer.

It localises to the nucleus. Receptor for retinoic acid. Retinoic acid receptors bind as heterodimers to their target response elements in response to their ligands, all-trans or 9-cis retinoic acid, and regulate gene expression in various biological processes. The rar/rxr heterodimers bind to the retinoic acid response elements (RARE) composed of tandem 5'-AGGTCA-3' sites known as DR1-DR5. In Takifugu rubripes (Japanese pufferfish), this protein is Retinoic acid receptor alpha (rara).